The sequence spans 397 residues: L-asparaginase-like protein CG4372 (397 aa).

An N-terminal signal peptide occupies residues 1 to 22; the sequence is MLAQSCCLRLLILLLLFTTIGS. Cystine bridges form between Cys-90-Cys-95, Cys-189-Cys-205, and Cys-344-Cys-371.

This sequence belongs to the Ntn-hydrolase family.

The sequence is that of L-asparaginase-like protein CG4372 from Drosophila melanogaster (Fruit fly).